The sequence spans 148 residues: Lysozyme C (148 aa).

Positions Met-1 to Gly-18 are cleaved as a signal peptide. The 130-residue stretch at Lys-19–Val-148 folds into the C-type lysozyme domain. Intrachain disulfides connect Cys-24-Cys-146, Cys-48-Cys-134, Cys-83-Cys-99, and Cys-95-Cys-113. Residues Glu-53 and Asp-71 contribute to the active site.

The protein belongs to the glycosyl hydrolase 22 family. As to quaternary structure, monomer.

The protein localises to the secreted. It carries out the reaction Hydrolysis of (1-&gt;4)-beta-linkages between N-acetylmuramic acid and N-acetyl-D-glucosamine residues in a peptidoglycan and between N-acetyl-D-glucosamine residues in chitodextrins.. Its function is as follows. Lysozymes have primarily a bacteriolytic function; those in tissues and body fluids are associated with the monocyte-macrophage system and enhance the activity of immunoagents. Also plays a role in digestion in this species. The polypeptide is Lysozyme C (LYZ) (Semnopithecus entellus (Northern plains gray langur)).